The following is a 600-amino-acid chain: Arginine--tRNA ligase (600 aa).

A 'HIGH' region motif is present at residues 132–142; that stretch reads ANPTGPLHVGH.

Belongs to the class-I aminoacyl-tRNA synthetase family. As to quaternary structure, monomer.

The protein localises to the cytoplasm. The catalysed reaction is tRNA(Arg) + L-arginine + ATP = L-arginyl-tRNA(Arg) + AMP + diphosphate. This chain is Arginine--tRNA ligase, found in Ralstonia nicotianae (strain ATCC BAA-1114 / GMI1000) (Ralstonia solanacearum).